Here is a 156-residue protein sequence, read N- to C-terminus: Cyanate hydratase (156 aa).

Active-site residues include Arg96, Glu99, and Ser122.

Belongs to the cyanase family.

The enzyme catalyses cyanate + hydrogencarbonate + 3 H(+) = NH4(+) + 2 CO2. Its function is as follows. Catalyzes the reaction of cyanate with bicarbonate to produce ammonia and carbon dioxide. This is Cyanate hydratase from Escherichia coli (strain ATCC 8739 / DSM 1576 / NBRC 3972 / NCIMB 8545 / WDCM 00012 / Crooks).